The following is a 293-amino-acid chain: Cytidine deaminase (293 aa).

2 consecutive CMP/dCMP-type deaminase domains span residues 47-166 (DDRA…FGPA) and 186-293 (VSDD…YQAV). Residue 88–90 (NME) coordinates substrate. H101 is a Zn(2+) binding site. E103 (proton donor) is an active-site residue. Positions 128 and 131 each coordinate Zn(2+).

The protein belongs to the cytidine and deoxycytidylate deaminase family. In terms of assembly, homodimer. Zn(2+) is required as a cofactor.

The catalysed reaction is cytidine + H2O + H(+) = uridine + NH4(+). It catalyses the reaction 2'-deoxycytidine + H2O + H(+) = 2'-deoxyuridine + NH4(+). Its function is as follows. This enzyme scavenges exogenous and endogenous cytidine and 2'-deoxycytidine for UMP synthesis. This chain is Cytidine deaminase, found in Aeromonas hydrophila subsp. hydrophila (strain ATCC 7966 / DSM 30187 / BCRC 13018 / CCUG 14551 / JCM 1027 / KCTC 2358 / NCIMB 9240 / NCTC 8049).